Here is a 618-residue protein sequence, read N- to C-terminus: Vacuolar-sorting receptor 5 (618 aa).

The signal sequence occupies residues M1–G23. Over F24 to R563 the chain is Lumenal. A PA domain is found at K58–L164. N-linked (GlcNAc...) asparagine glycans are attached at residues N81, N293, and N430. 2 EGF-like domains span residues E412–K462 and G465–E511. Intrachain disulfides connect C416-C434, C423-C443, C445-C461, C469-C489, C476-C497, C499-C510, and C540-C553. Positions D512–I554 constitute an EGF-like 3; calcium-binding domain. The N-linked (GlcNAc...) asparagine glycan is linked to N542. A helical membrane pass occupies residues G564–F584. The Cytoplasmic portion of the chain corresponds to Y585–K618. The Tyrosine-based internalization motif signature appears at Y604–L607.

It belongs to the VSR (BP-80) family. As to expression, expressed in seedlings, roots, leaves, flowers and siliques.

It is found in the membrane. The protein resides in the golgi apparatus membrane. The protein localises to the cytoplasmic vesicle. Its subcellular location is the clathrin-coated vesicle membrane. It localises to the prevacuolar compartment membrane. Its function is as follows. Vacuolar-sorting receptor (VSR) involved in clathrin-coated vesicles sorting from Golgi apparatus to vacuoles. The sequence is that of Vacuolar-sorting receptor 5 (VSR5) from Arabidopsis thaliana (Mouse-ear cress).